The chain runs to 422 residues: L-threonine dehydratase biosynthetic IlvA (422 aa).

N6-(pyridoxal phosphate)lysine is present on Lys56. Pyridoxal 5'-phosphate contacts are provided by residues Asn83, Gly189–Leu193, and Ser315. An ACT-like domain is found at His339 to Glu413.

The protein belongs to the serine/threonine dehydratase family. As to quaternary structure, homotetramer. The cofactor is pyridoxal 5'-phosphate.

It carries out the reaction L-threonine = 2-oxobutanoate + NH4(+). It participates in amino-acid biosynthesis; L-isoleucine biosynthesis; 2-oxobutanoate from L-threonine: step 1/1. In terms of biological role, catalyzes the anaerobic formation of alpha-ketobutyrate and ammonia from threonine in a two-step reaction. The first step involved a dehydration of threonine and a production of enamine intermediates (aminocrotonate), which tautomerizes to its imine form (iminobutyrate). Both intermediates are unstable and short-lived. The second step is the nonenzymatic hydrolysis of the enamine/imine intermediates to form 2-ketobutyrate and free ammonia. In the low water environment of the cell, the second step is accelerated by RidA. In Staphylococcus aureus (strain Mu50 / ATCC 700699), this protein is L-threonine dehydratase biosynthetic IlvA (ilvA).